The chain runs to 174 residues: RNA polymerase sigma factor CarQ (174 aa).

Positions 39 to 52 (DLLQATFLSVIRSR) match the Polymerase core binding motif. The interval 86–106 (YASREDTATPASAAPDDSDPS) is disordered. The H-T-H motif DNA-binding region spans 136-155 (FEEIGALRGISPGAARLRAH).

The protein belongs to the sigma-70 factor family. ECF subfamily.

Its function is as follows. Sigma factors are initiation factors that promote the attachment of RNA polymerase to specific initiation sites and are then released. This sigma factor regulates genes for the light induced biosynthesis of carotenoids. This Myxococcus xanthus protein is RNA polymerase sigma factor CarQ (carQ).